The chain runs to 206 residues: Ion-translocating oxidoreductase complex subunit G (206 aa).

Residues 9-29 traverse the membrane as a helical segment; it reads GITLALFAAGSTGLTAVINQM. Position 174 is an FMN phosphoryl threonine (threonine 174).

It belongs to the RnfG family. The complex is composed of six subunits: RsxA, RsxB, RsxC, RsxD, RsxE and RsxG. FMN serves as cofactor.

The protein resides in the cell inner membrane. Functionally, part of a membrane-bound complex that couples electron transfer with translocation of ions across the membrane. Required to maintain the reduced state of SoxR. In Salmonella typhi, this protein is Ion-translocating oxidoreductase complex subunit G.